A 584-amino-acid chain; its full sequence is 2-succinyl-5-enolpyruvyl-6-hydroxy-3-cyclohexene-1-carboxylate synthase (584 aa).

This sequence belongs to the TPP enzyme family. MenD subfamily. In terms of assembly, homodimer. Requires Mg(2+) as cofactor. It depends on Mn(2+) as a cofactor. The cofactor is thiamine diphosphate.

It catalyses the reaction isochorismate + 2-oxoglutarate + H(+) = 5-enolpyruvoyl-6-hydroxy-2-succinyl-cyclohex-3-ene-1-carboxylate + CO2. It participates in quinol/quinone metabolism; 1,4-dihydroxy-2-naphthoate biosynthesis; 1,4-dihydroxy-2-naphthoate from chorismate: step 2/7. Its pathway is quinol/quinone metabolism; menaquinone biosynthesis. Catalyzes the thiamine diphosphate-dependent decarboxylation of 2-oxoglutarate and the subsequent addition of the resulting succinic semialdehyde-thiamine pyrophosphate anion to isochorismate to yield 2-succinyl-5-enolpyruvyl-6-hydroxy-3-cyclohexene-1-carboxylate (SEPHCHC). The protein is 2-succinyl-5-enolpyruvyl-6-hydroxy-3-cyclohexene-1-carboxylate synthase of Bacillus anthracis.